A 93-amino-acid chain; its full sequence is DNA-binding protein Fis (93 aa).

Residues 74–93 (QTRAALMMGINRGTLRKKLK) constitute a DNA-binding region (H-T-H motif).

Belongs to the transcriptional regulatory Fis family. Homodimer.

Functionally, activates ribosomal RNA transcription. Plays a direct role in upstream activation of rRNA promoters. This chain is DNA-binding protein Fis, found in Klebsiella pneumoniae.